The sequence spans 103 residues: Cell division protein FtsB (103 aa).

Residues 1–3 are Cytoplasmic-facing; that stretch reads MGK. A helical transmembrane segment spans residues 4–21; the sequence is LTLLLLAILVWLQYSLWF. Residues 22–103 lie on the Periplasmic side of the membrane; the sequence is GKNGIHDYTR…RAQSAGQNNR (82 aa). Positions 31 to 71 form a coiled coil; that stretch reads RVNDDVAAQQATNAKLKARNDQLFAEIDDLNGGQEALEERA.

Belongs to the FtsB family. In terms of assembly, part of a complex composed of FtsB, FtsL and FtsQ.

It localises to the cell inner membrane. Essential cell division protein. May link together the upstream cell division proteins, which are predominantly cytoplasmic, with the downstream cell division proteins, which are predominantly periplasmic. The polypeptide is Cell division protein FtsB (Shigella boydii serotype 18 (strain CDC 3083-94 / BS512)).